A 474-amino-acid chain; its full sequence is Na(+)/H(+) antiporter NhaA 3 (474 aa).

11 helical membrane passes run 31–51, 73–93, 110–130, 141–161, 171–191, 194–214, 220–240, 280–300, 309–329, 347–367, and 378–398; these read VGGV…NIPA, LSVA…VAGI, AALP…VYTV, GWAV…AVIG, FLLT…AVFF, TLNF…WLLL, GWYV…NSGV, LAVP…GALA, LGVV…GTWL, VFAV…IGEL, and EVKA…TVLL.

The protein belongs to the NhaA Na(+)/H(+) (TC 2.A.33) antiporter family.

The protein resides in the cell membrane. The catalysed reaction is Na(+)(in) + 2 H(+)(out) = Na(+)(out) + 2 H(+)(in). Its function is as follows. Na(+)/H(+) antiporter that extrudes sodium in exchange for external protons. The polypeptide is Na(+)/H(+) antiporter NhaA 3 (Streptomyces coelicolor (strain ATCC BAA-471 / A3(2) / M145)).